Here is a 196-residue protein sequence, read N- to C-terminus: ATP-dependent Clp protease proteolytic subunit (196 aa).

Serine 98 (nucleophile) is an active-site residue. Residue histidine 123 is part of the active site.

This sequence belongs to the peptidase S14 family. Fourteen ClpP subunits assemble into 2 heptameric rings which stack back to back to give a disk-like structure with a central cavity, resembling the structure of eukaryotic proteasomes.

It is found in the cytoplasm. The catalysed reaction is Hydrolysis of proteins to small peptides in the presence of ATP and magnesium. alpha-casein is the usual test substrate. In the absence of ATP, only oligopeptides shorter than five residues are hydrolyzed (such as succinyl-Leu-Tyr-|-NHMec, and Leu-Tyr-Leu-|-Tyr-Trp, in which cleavage of the -Tyr-|-Leu- and -Tyr-|-Trp bonds also occurs).. In terms of biological role, cleaves peptides in various proteins in a process that requires ATP hydrolysis. Has a chymotrypsin-like activity. Plays a major role in the degradation of misfolded proteins. This Actinobacillus pleuropneumoniae serotype 7 (strain AP76) protein is ATP-dependent Clp protease proteolytic subunit.